The sequence spans 446 residues: MSNTVFIGAKEYFPGIGKIGFEGRDSDNPLAFKVYDANKQVAGKSMAEHLRFAVAYWHSFCGNGADPFGPGTRAYPWDVGNTALARAEAKSDAAFEFFTKLGVPYYCFHDIDLAPDADDIGEYENNLKHMVRIAKQRQADTGVKLLWGTANLFSHPRYMNGASTNPDFNVVARAAVQVKAAIDATVELGGENYVFWGGREGYACLHNTQMKREQDNMARFLTLARDYGRAIGFTGNFLIEPKPMEPMKHQYDFDSATVIGFLHQHGLDQDFKLNIEANHATLSGHSFEHDLQVASDAGLLGSIDANRGNPQNGWDTDQFPTDLYDTVGAMLVVLRQGGLAPGGLNFDAKVRRESSDPQDLFLAHIGGMDAFARGLEVADALLTSSPLETWRAQRYASFDSGAGADFANGTSTLADLAKYAAGRGEPTQVSGRQEAYENLINQYLTR.

Catalysis depends on residues His-109 and Asp-112. Glu-240, Glu-276, His-279, Asp-304, Asp-315, Asp-317, and Asp-347 together coordinate Mg(2+).

The protein belongs to the xylose isomerase family. As to quaternary structure, homotetramer. Requires Mg(2+) as cofactor.

It is found in the cytoplasm. The enzyme catalyses alpha-D-xylose = alpha-D-xylulofuranose. This chain is Xylose isomerase 1, found in Xanthomonas campestris pv. campestris (strain 8004).